The primary structure comprises 402 residues: WAT1-related protein At5g07050 (402 aa).

The next 10 helical transmembrane spans lie at 20–40 (FAMI…KISL), 48–68 (VLVV…AFFF), 74–94 (PKIT…GPVI), 109–129 (TFSC…AVLF), 149–169 (VVTV…VELF), 196–216 (FLKG…LFVL), 229–249 (LSLT…VTFV), 266–286 (LAAA…QGIV), 293–313 (VFAT…GSFV), and 318–338 (IFLG…AVLW). EamA domains follow at residues 29 to 159 (YAGM…MLMT) and 208 to 337 (LAWA…YAVL).

The protein belongs to the drug/metabolite transporter (DMT) superfamily. Plant drug/metabolite exporter (P-DME) (TC 2.A.7.4) family.

Its subcellular location is the membrane. This chain is WAT1-related protein At5g07050, found in Arabidopsis thaliana (Mouse-ear cress).